Reading from the N-terminus, the 281-residue chain is MAQKIIRVGSIEVANDKPMVLFGGMNVLESRDMAMQVCEEYVKVTEKLGIPYVFKASFDKANRSSVNSYRGPGLEEGMRIFEEIKRTFNVPLITDVHEPHQAAVVAEVCDIIQLPAFLSRQTDLVVAMAKTGAIINIKKAQFLAPQEMKHILTKCEEAGNDQLILCERGSSFGYNNLVVDMLGFGIMKQFEYPILFDVTHALQMPGGRSDSAGGRRAQVLDLAKAGISQNLAGLFLEAHPDPDNAKCDGPCALRLDKLEPFLAQLKSLDELVKSFPIVETA.

The protein belongs to the KdsA family.

Its subcellular location is the cytoplasm. The catalysed reaction is D-arabinose 5-phosphate + phosphoenolpyruvate + H2O = 3-deoxy-alpha-D-manno-2-octulosonate-8-phosphate + phosphate. The protein operates within carbohydrate biosynthesis; 3-deoxy-D-manno-octulosonate biosynthesis; 3-deoxy-D-manno-octulosonate from D-ribulose 5-phosphate: step 2/3. Its pathway is bacterial outer membrane biogenesis; lipopolysaccharide biosynthesis. This chain is 2-dehydro-3-deoxyphosphooctonate aldolase, found in Pseudomonas syringae pv. syringae (strain B728a).